The sequence spans 804 residues: ABC transporter aclQ (804 aa).

Transmembrane regions (helical) follow at residues 3–23 (LAVL…ISYL), 52–72 (FTAI…SITI), 97–117 (IAVF…PFSP), 119–139 (LSHS…LAMF), 155–175 (LQLG…ALYF), 206–226 (HGGW…LWPS), 239–259 (FVLL…LGIV), 349–369 (LVFQ…YFLI), and 373–393 (AFYS…TIYM). One can recognise an ABC transmembrane type-1 domain in the interval 236–518 (IFCFVLLVIQ…FGSFYTQVQN (283 aa)). A glycan (N-linked (GlcNAc...) asparagine) is linked at N460. A run of 2 helical transmembrane segments spans residues 464 to 484 (NLLF…QISA) and 489 to 509 (VAMF…LNFF). The 235-residue stretch at 552-786 (VEFTHVNFAY…NGMYSQMWAK (235 aa)) folds into the ABC transporter domain. ATP is bound at residue 585 to 592 (GESGSGKS). N639 and N797 each carry an N-linked (GlcNAc...) asparagine glycan.

It belongs to the ABC transporter superfamily. ABCB family. Heavy Metal importer (TC 3.A.1.210) subfamily.

It localises to the membrane. In terms of biological role, ABC transporter; part of the gene cluster that mediates the biosynthesis of aspirochlorine (or antibiotic A30641), an unusual halogenated spiro compound with distinctive antifungal properties due to selective inhibition of protein biosynthesis, and which is also active against bacteria, viruses, and murine tumor cells. The polypeptide is ABC transporter aclQ (Aspergillus oryzae (strain ATCC 42149 / RIB 40) (Yellow koji mold)).